We begin with the raw amino-acid sequence, 282 residues long: D-alanine aminotransferase (282 aa).

A substrate-binding site is contributed by Y32. A pyridoxal 5'-phosphate-binding site is contributed by R51. Substrate-binding residues include R99 and H101. The active-site Proton acceptor is K146. At K146 the chain carries N6-(pyridoxal phosphate)lysine. E178 provides a ligand contact to pyridoxal 5'-phosphate.

Belongs to the class-IV pyridoxal-phosphate-dependent aminotransferase family. In terms of assembly, homodimer. Pyridoxal 5'-phosphate is required as a cofactor.

It carries out the reaction D-alanine + 2-oxoglutarate = D-glutamate + pyruvate. Functionally, acts on the D-isomers of alanine, leucine, aspartate, glutamate, aminobutyrate, norvaline and asparagine. The enzyme transfers an amino group from a substrate D-amino acid to the pyridoxal phosphate cofactor to form pyridoxamine and an alpha-keto acid in the first half-reaction. The second half-reaction is the reverse of the first, transferring the amino group from the pyridoxamine to a second alpha-keto acid to form the product D-amino acid via a ping-pong mechanism. This is an important process in the formation of D-alanine and D-glutamate, which are essential bacterial cell wall components. The chain is D-alanine aminotransferase (dat) from Staphylococcus aureus (strain MSSA476).